A 442-amino-acid polypeptide reads, in one-letter code: Large ribosomal subunit protein mL65 (442 aa).

This sequence belongs to the mitochondrion-specific ribosomal protein mL65 family. As to quaternary structure, component of the mitochondrial ribosome small subunit (28S) which comprises a 12S rRNA and about 30 distinct proteins.

It localises to the mitochondrion. The protein is Large ribosomal subunit protein mL65 (Mrps30) of Mus musculus (Mouse).